The chain runs to 163 residues: NADH-quinone oxidoreductase subunit I (163 aa).

4Fe-4S ferredoxin-type domains lie at 54 to 84 and 94 to 123; these read LRRY…IDSA and TRYD…ETHI. The [4Fe-4S] cluster site is built by Cys-64, Cys-67, Cys-70, Cys-74, Cys-103, Cys-106, Cys-109, and Cys-113.

It belongs to the complex I 23 kDa subunit family. NDH-1 is composed of 14 different subunits. Subunits NuoA, H, J, K, L, M, N constitute the membrane sector of the complex. [4Fe-4S] cluster is required as a cofactor.

It localises to the cell inner membrane. It catalyses the reaction a quinone + NADH + 5 H(+)(in) = a quinol + NAD(+) + 4 H(+)(out). Its function is as follows. NDH-1 shuttles electrons from NADH, via FMN and iron-sulfur (Fe-S) centers, to quinones in the respiratory chain. The immediate electron acceptor for the enzyme in this species is believed to be ubiquinone. Couples the redox reaction to proton translocation (for every two electrons transferred, four hydrogen ions are translocated across the cytoplasmic membrane), and thus conserves the redox energy in a proton gradient. The polypeptide is NADH-quinone oxidoreductase subunit I (Xanthomonas campestris pv. campestris (strain 8004)).